Here is a 220-residue protein sequence, read N- to C-terminus: ATP synthase subunit 5, mitochondrial (220 aa).

Belongs to the ATPase delta chain family. F-type ATPases have 2 components, CF(1) - the catalytic core - and CF(0) - the membrane proton channel. CF(1) has five subunits: alpha(3), beta(3), gamma(1), delta(1), epsilon(1). CF(0) has three main subunits: a, b and c.

The protein resides in the mitochondrion. Its subcellular location is the mitochondrion inner membrane. Its function is as follows. Mitochondrial membrane ATP synthase (F(1)F(0) ATP synthase or Complex V) produces ATP from ADP in the presence of a proton gradient across the membrane which is generated by electron transport complexes of the respiratory chain. F-type ATPases consist of two structural domains, F(1) - containing the extramembraneous catalytic core and F(0) - containing the membrane proton channel, linked together by a central stalk and a peripheral stalk. During catalysis, ATP synthesis in the catalytic domain of F(1) is coupled via a rotary mechanism of the central stalk subunits to proton translocation. Part of the complex F(0) domain and the peripheric stalk, which acts as a stator to hold the catalytic alpha(3)beta(3) subcomplex and subunit a/ATP6 static relative to the rotary elements. This chain is ATP synthase subunit 5, mitochondrial (atp-5), found in Neurospora crassa (strain ATCC 24698 / 74-OR23-1A / CBS 708.71 / DSM 1257 / FGSC 987).